We begin with the raw amino-acid sequence, 514 residues long: Alpha-1B adrenergic receptor (514 aa).

Topologically, residues 1-45 (MNPDLDTGHNTSAPAHWGELKDANFTGPNQTSSNSTLPQLDVTRA) are extracellular. N-linked (GlcNAc...) asparagine glycosylation is found at Asn10, Asn24, Asn29, and Asn34. The helical transmembrane segment at 46–69 (ISVGCLGAFILFAIVGNILVILSV) threads the bilayer. The Cytoplasmic segment spans residues 70-82 (ACNRHLRTPTNYF). A helical membrane pass occupies residues 83-104 (IVNLAIADLLLSFTDLPFSATL). Residues 105-114 (EVLGYWVLGR) lie on the Extracellular side of the membrane. The helical transmembrane segment at 115–140 (IFCDIWAAVDVLCCTASILSLCAISI) threads the bilayer. Cys117 and Cys194 are oxidised to a cystine. Over 141–160 (DRYIGVRYSLQYPTLVTRRK) the chain is Cytoplasmic. A helical membrane pass occupies residues 161-183 (AILALLSVWVLSTVISIGPLLGW). The Extracellular portion of the chain corresponds to 184-200 (KEPAPNDDKECGVTEEP). Residues 201-223 (FYALFSSLGSFYIPLAVILVMYC) traverse the membrane as a helical segment. The Cytoplasmic portion of the chain corresponds to 224-294 (RVYIVAKRTT…FSREKKAAKT (71 aa)). Thr263 bears the Phosphothreonine mark. The helical transmembrane segment at 295 to 318 (LGIVVGMFILCWLPFFIALPLGSL) threads the bilayer. Residues 319 to 325 (FSTLKPP) lie on the Extracellular side of the membrane. A helical transmembrane segment spans residues 326-350 (DAVFKVVFWLGYFNSCLNPIIYPCS). The Cytoplasmic segment spans residues 351-514 (SKEFKRAFMR…SNMPLAPGHF (164 aa)). The S-palmitoyl cysteine moiety is linked to residue Cys364. The short motif at 367–377 (RGGRRRRRRRR) is the Nuclear localization signal element. Disordered regions lie at residues 391–429 (GGSL…GYLG) and 473–514 (LGEP…PGHF). Over residues 409-423 (SCMSGSQRTLPSASP) the composition is skewed to polar residues.

It belongs to the G-protein coupled receptor 1 family. Adrenergic receptor subfamily. ADRA1B sub-subfamily. Homo- and heterooligomer. Heterooligomerizes with ADRA1B homooligomers in cardiac myocytes. Interacts with CAVIN4.

It is found in the nucleus membrane. Its subcellular location is the cell membrane. The protein resides in the cytoplasm. The protein localises to the membrane. It localises to the caveola. Functionally, this alpha-adrenergic receptor mediates its action by association with G proteins that activate a phosphatidylinositol-calcium second messenger system. Its effect is mediated by G(q) and G(11) proteins. Nuclear ADRA1A-ADRA1B heterooligomers regulate phenylephrine (PE)-stimulated ERK signaling in cardiac myocytes. This chain is Alpha-1B adrenergic receptor (Adra1b), found in Mus musculus (Mouse).